Reading from the N-terminus, the 476-residue chain is Bifunctional protein HldE (476 aa).

The interval methionine 1–threonine 318 is ribokinase. Asparagine 195–glutamate 198 lines the ATP pocket. Aspartate 264 is an active-site residue. Positions methionine 344 to glycine 476 are cytidylyltransferase.

This sequence in the N-terminal section; belongs to the carbohydrate kinase PfkB family. It in the C-terminal section; belongs to the cytidylyltransferase family. As to quaternary structure, homodimer.

The catalysed reaction is D-glycero-beta-D-manno-heptose 7-phosphate + ATP = D-glycero-beta-D-manno-heptose 1,7-bisphosphate + ADP + H(+). It carries out the reaction D-glycero-beta-D-manno-heptose 1-phosphate + ATP + H(+) = ADP-D-glycero-beta-D-manno-heptose + diphosphate. The protein operates within nucleotide-sugar biosynthesis; ADP-L-glycero-beta-D-manno-heptose biosynthesis; ADP-L-glycero-beta-D-manno-heptose from D-glycero-beta-D-manno-heptose 7-phosphate: step 1/4. Its pathway is nucleotide-sugar biosynthesis; ADP-L-glycero-beta-D-manno-heptose biosynthesis; ADP-L-glycero-beta-D-manno-heptose from D-glycero-beta-D-manno-heptose 7-phosphate: step 3/4. It participates in bacterial outer membrane biogenesis; LPS core biosynthesis. Catalyzes the phosphorylation of D-glycero-D-manno-heptose 7-phosphate at the C-1 position to selectively form D-glycero-beta-D-manno-heptose-1,7-bisphosphate. In terms of biological role, catalyzes the ADP transfer from ATP to D-glycero-beta-D-manno-heptose 1-phosphate, yielding ADP-D-glycero-beta-D-manno-heptose. This Vibrio vulnificus (strain CMCP6) protein is Bifunctional protein HldE.